The sequence spans 847 residues: Signal transducer and activator of transcription 6 (847 aa).

N-acetylserine is present on S2. The 116-residue stretch at 517 to 632 (WFDGVLDLTK…EAFRSHYKPE (116 aa)) folds into the SH2 domain. A Phosphotyrosine; by JAK modification is found at Y641. Residues 802-806 (LTKLL) carry the LXXLL motif motif. A disordered region spans residues 809 to 847 (GQGESGGGSLGAQPLLQPSHYGQSGISMSHMDLRANPSW).

This sequence belongs to the transcription factor STAT family. As to quaternary structure, forms a homodimer or a heterodimer with a related family member. Interacts with NCOA1 via its C-terminal LXXLL motif. In terms of processing, tyrosine phosphorylated on Tyr-641 following stimulation by IL4/interleukin-4. Tyrosine phosphorylated following stimulation by IL3/interleukin-3. Dephosphorylation on tyrosine residues by PTPN2 negatively regulates the IL4/interleukin-4 mediated signaling. Mono-ADP-ribosylated by PARP14.

It localises to the cytoplasm. The protein resides in the nucleus. Its function is as follows. Carries out a dual function: signal transduction and activation of transcription. Involved in IL4/interleukin-4- and IL3/interleukin-3-mediated signaling. The polypeptide is Signal transducer and activator of transcription 6 (STAT6) (Homo sapiens (Human)).